The primary structure comprises 229 residues: Potassium/proton antiporter CemA (229 aa).

Helical transmembrane passes span 7-27 (FTPL…SLSF), 114-134 (LICF…LLIL), 154-174 (ILLL…ELMI), and 189-209 (IISG…KYWI).

It belongs to the CemA family.

The protein localises to the plastid. Its subcellular location is the chloroplast inner membrane. The catalysed reaction is K(+)(in) + H(+)(out) = K(+)(out) + H(+)(in). Its function is as follows. Contributes to K(+)/H(+) antiport activity by supporting proton efflux to control proton extrusion and homeostasis in chloroplasts in a light-dependent manner to modulate photosynthesis. Prevents excessive induction of non-photochemical quenching (NPQ) under continuous-light conditions. Indirectly promotes efficient inorganic carbon uptake into chloroplasts. This is Potassium/proton antiporter CemA from Gossypium barbadense (Sea Island cotton).